The sequence spans 1405 residues: DNA-directed RNA polymerase subunit beta' (1405 aa).

Zn(2+) is bound by residues C65, C67, C80, and C83. Mg(2+) contacts are provided by D468, D470, and D472. 4 residues coordinate Zn(2+): C811, C885, C892, and C895.

Belongs to the RNA polymerase beta' chain family. The RNAP catalytic core consists of 2 alpha, 1 beta, 1 beta' and 1 omega subunit. When a sigma factor is associated with the core the holoenzyme is formed, which can initiate transcription. Requires Mg(2+) as cofactor. It depends on Zn(2+) as a cofactor.

The enzyme catalyses RNA(n) + a ribonucleoside 5'-triphosphate = RNA(n+1) + diphosphate. Its function is as follows. DNA-dependent RNA polymerase catalyzes the transcription of DNA into RNA using the four ribonucleoside triphosphates as substrates. This Azobacteroides pseudotrichonymphae genomovar. CFP2 protein is DNA-directed RNA polymerase subunit beta'.